The following is a 221-amino-acid chain: Guanylate kinase (221 aa).

The 180-residue stretch at 20–199 (GLMFILSSPS…CFGKVREILA (180 aa)) folds into the Guanylate kinase-like domain. ATP is bound at residue 27–34 (SPSGAGKT).

Belongs to the guanylate kinase family.

Its subcellular location is the cytoplasm. The catalysed reaction is GMP + ATP = GDP + ADP. In terms of biological role, essential for recycling GMP and indirectly, cGMP. The protein is Guanylate kinase of Novosphingobium aromaticivorans (strain ATCC 700278 / DSM 12444 / CCUG 56034 / CIP 105152 / NBRC 16084 / F199).